The primary structure comprises 185 residues: Elongation factor P (185 aa).

It belongs to the elongation factor P family.

The protein localises to the cytoplasm. Its pathway is protein biosynthesis; polypeptide chain elongation. Involved in peptide bond synthesis. Stimulates efficient translation and peptide-bond synthesis on native or reconstituted 70S ribosomes in vitro. Probably functions indirectly by altering the affinity of the ribosome for aminoacyl-tRNA, thus increasing their reactivity as acceptors for peptidyl transferase. In Clostridium novyi (strain NT), this protein is Elongation factor P.